Here is a 572-residue protein sequence, read N- to C-terminus: Arginine--tRNA ligase (572 aa).

Residues Pro-122–His-132 carry the 'HIGH' region motif.

The protein belongs to the class-I aminoacyl-tRNA synthetase family. As to quaternary structure, monomer.

The protein localises to the cytoplasm. It catalyses the reaction tRNA(Arg) + L-arginine + ATP = L-arginyl-tRNA(Arg) + AMP + diphosphate. The polypeptide is Arginine--tRNA ligase (Neisseria gonorrhoeae (strain NCCP11945)).